The chain runs to 378 residues: tRNA (guanine(26)-N(2))-dimethyltransferase (378 aa).

The region spanning 4–374 (KEVTEGKVRI…KGYEEIIRCV (371 aa)) is the Trm1 methyltransferase domain. S-adenosyl-L-methionine is bound by residues R44, R69, D87, D114, and A115. Residues C246, C249, C263, and C266 each coordinate Zn(2+).

Belongs to the class I-like SAM-binding methyltransferase superfamily. Trm1 family.

It catalyses the reaction guanosine(26) in tRNA + 2 S-adenosyl-L-methionine = N(2)-dimethylguanosine(26) in tRNA + 2 S-adenosyl-L-homocysteine + 2 H(+). Dimethylates a single guanine residue at position 26 of a number of tRNAs using S-adenosyl-L-methionine as donor of the methyl groups. This is tRNA (guanine(26)-N(2))-dimethyltransferase from Saccharolobus islandicus (strain M.14.25 / Kamchatka #1) (Sulfolobus islandicus).